The sequence spans 350 residues: MKEVSLRGISKTFGQLTVLDRIDLEIHSGEFLVLVGPSGCGKSTLLRMVAGLEPISGGDLVIGGERANELPPQKRNIAMVFQSYALFPHMTARENIGFGPRIRGEKAAETAAKVDHAASILNLHSYLDRYPRQLSGGQRQRVAMGRAIVREPSVFLFDEPLSNLDAQLRVQMRTEIKALHQRLKSTVIYVTHDQIEAMTMADRIVVMNQGKIQQIGAPLDLYDRPANKFVAGFIGSPSMSFIPGTVADGFFCTGEGEKIAVSAAAKGARAAEAGIRPENFVIAREGAGLTLVVEVIEPTGPETHIYGRIAGEPVRAVFRERIQLAPGEQVPVTAGSEHIHLFDKESGLPL.

The ABC transporter domain maps to 4-234; sequence VSLRGISKTF…PANKFVAGFI (231 aa). 36–43 contributes to the ATP binding site; that stretch reads GPSGCGKS.

Belongs to the ABC transporter superfamily. The complex is composed of two ATP-binding proteins (BruAb2_0487), two transmembrane proteins (BruAb2_0483) and a solute-binding protein (BruAb2_0484).

The protein localises to the cell inner membrane. In terms of biological role, probably part of an ABC transporter complex. Probably responsible for energy coupling to the transport system. This is Putative ATP-binding protein BruAb2_0487 from Brucella abortus biovar 1 (strain 9-941).